A 110-amino-acid polypeptide reads, in one-letter code: Large ribosomal subunit protein uL22 (110 aa).

Belongs to the universal ribosomal protein uL22 family. In terms of assembly, part of the 50S ribosomal subunit.

This protein binds specifically to 23S rRNA; its binding is stimulated by other ribosomal proteins, e.g. L4, L17, and L20. It is important during the early stages of 50S assembly. It makes multiple contacts with different domains of the 23S rRNA in the assembled 50S subunit and ribosome. Its function is as follows. The globular domain of the protein is located near the polypeptide exit tunnel on the outside of the subunit, while an extended beta-hairpin is found that lines the wall of the exit tunnel in the center of the 70S ribosome. This chain is Large ribosomal subunit protein uL22, found in Leptospira interrogans serogroup Icterohaemorrhagiae serovar copenhageni (strain Fiocruz L1-130).